Consider the following 583-residue polypeptide: Nuclear hormone receptor family member nhr-31 (583 aa).

The disordered stretch occupies residues 43–77 (DLRTSGATSSSGPATSYIIRPSDKQPTVSSGGSQN). Positions 46–58 (TSGATSSSGPATS) are enriched in low complexity. The segment covering 66–77 (KQPTVSSGGSQN) has biased composition (polar residues). Residues 79–154 (DSVCAVCGDG…AGMDPKAVRP (76 aa)) constitute a DNA-binding region (nuclear receptor). NR C4-type zinc fingers lie at residues 82 to 102 (CAVCGDGIAKLHYGVLACYGC) and 118 to 142 (CRFSNNCIVDKFQRNSCRYCRFQRC). The region spanning 195–464 (ETRILLMQLM…DNLLAEMFGD (270 aa)) is the NR LBD domain.

This sequence belongs to the nuclear hormone receptor family.

The protein localises to the nucleus. Orphan nuclear receptor. This chain is Nuclear hormone receptor family member nhr-31 (nhr-31), found in Caenorhabditis elegans.